A 277-amino-acid polypeptide reads, in one-letter code: 4-hydroxy-tetrahydrodipicolinate reductase (277 aa).

NAD(+)-binding positions include 10–15 (GAGGRM) and Glu-36. Arg-37 is an NADP(+) binding site. Residues 100–102 (GTT) and 124–127 (SGNM) contribute to the NAD(+) site. His-158 (proton donor/acceptor) is an active-site residue. A (S)-2,3,4,5-tetrahydrodipicolinate-binding site is contributed by His-159. The active-site Proton donor is the Lys-162. 168–169 (GT) provides a ligand contact to (S)-2,3,4,5-tetrahydrodipicolinate.

It belongs to the DapB family.

Its subcellular location is the cytoplasm. It carries out the reaction (S)-2,3,4,5-tetrahydrodipicolinate + NAD(+) + H2O = (2S,4S)-4-hydroxy-2,3,4,5-tetrahydrodipicolinate + NADH + H(+). It catalyses the reaction (S)-2,3,4,5-tetrahydrodipicolinate + NADP(+) + H2O = (2S,4S)-4-hydroxy-2,3,4,5-tetrahydrodipicolinate + NADPH + H(+). The protein operates within amino-acid biosynthesis; L-lysine biosynthesis via DAP pathway; (S)-tetrahydrodipicolinate from L-aspartate: step 4/4. In terms of biological role, catalyzes the conversion of 4-hydroxy-tetrahydrodipicolinate (HTPA) to tetrahydrodipicolinate. In Chelativorans sp. (strain BNC1), this protein is 4-hydroxy-tetrahydrodipicolinate reductase.